An 899-amino-acid chain; its full sequence is Ewing's tumor-associated antigen 1 homolog (899 aa).

The tract at residues 1–82 (MSRRRKHGDS…TEERYETPKR (82 aa)) is disordered. Positions 71–81 (SNTEERYETPK) are enriched in basic and acidic residues. The ATR-activation domain (AAD) motif lies at 105–111 (IFWDQNS). Positions 180-210 (TKLKSQNQEEELMKLAKQFDKNMEELDVIQE) form a coiled coil. Glycyl lysine isopeptide (Lys-Gly) (interchain with G-Cter in SUMO2) cross-links involve residues Lys-416 and Lys-444. Ser-467 bears the Phosphoserine mark. Glycyl lysine isopeptide (Lys-Gly) (interchain with G-Cter in SUMO2) cross-links involve residues Lys-485 and Lys-539. The RBM1 motif signature appears at 607–622 (DDVDDDILYQACDDIE). Ser-810 carries the post-translational modification Phosphoserine. A disordered region spans residues 833–899 (NKTVNPLPGK…AQASSVKKGR (67 aa)). Residues 859–877 (PSKEEEEKNRKCSPEEIQR) show a composition bias toward basic and acidic residues. Residues 868-890 (RKCSPEEIQRKRQAALIRRMAKA) carry the RBM2 motif motif.

Interacts (via RBM1 motif) with RPA1. Interacts (via RBM2 motif) with RPA2. Interacts (via the ATR-activation domain motif) with ATR. Post-translationally, phosphorylated by ATR.

The protein localises to the nucleus. Its function is as follows. Replication stress response protein that accumulates at DNA damage sites and promotes replication fork progression and integrity. Recruited to stalled replication forks via interaction with the RPA complex and directly stimulates ATR kinase activity independently of TOPBP1. Probably only regulates a subset of ATR targets. In Bos taurus (Bovine), this protein is Ewing's tumor-associated antigen 1 homolog.